Reading from the N-terminus, the 954-residue chain is E3 ubiquitin-protein ligase arkadia (954 aa).

Residues 50–66 (LCSDTNKQQRDLNSNGT) are compositionally biased toward polar residues. Disordered regions lie at residues 50-175 (LCSD…VSSL) and 193-276 (RKRF…SGGM). Low complexity-rich tracts occupy residues 112 to 131 (SSFS…GDSD) and 232 to 251 (SSSS…SSST). Positions 280-284 (VVVIE) match the SUMO interaction motif 1 (SIM) motif. The short motif at 305–311 (EVEIVTV) is the SUMO interaction motif 2 (SIM) element. 3 disordered regions span residues 318–346 (RTTL…RNRV), 364–452 (TVDE…MPRL), and 485–509 (HFPH…SFRD). Positions 328–337 (WGQNTQSGRT) are enriched in polar residues. An SUMO interaction motif 3 (SIM) motif is present at residues 360–364 (VVDLT). Positions 385-395 (VSTVSSNTSTS) are enriched in low complexity. Over residues 485–496 (HFPHHHHHHHQS) the composition is skewed to basic residues. The ubiquitin binding stretch occupies residues 867 to 869 (YPH). Residues Cys-902 and Cys-905 each coordinate Zn(2+). The RING-type; atypical zinc-finger motif lies at 902–943 (CTICLSILEEGEDVRRLPCMHLFHQVCVDQWLITNKKCPICR). The tract at residues 917-921 (RLPCM) is ubiquitin binding. His-925 and Cys-928 together coordinate Zn(2+).

It belongs to the Arkadia family. As to quaternary structure, monomer.

It localises to the nucleus. Its subcellular location is the cytoplasm. The protein localises to the PML body. The catalysed reaction is S-ubiquitinyl-[E2 ubiquitin-conjugating enzyme]-L-cysteine + [acceptor protein]-L-lysine = [E2 ubiquitin-conjugating enzyme]-L-cysteine + N(6)-ubiquitinyl-[acceptor protein]-L-lysine.. It functions in the pathway protein modification; protein ubiquitination. With respect to regulation, binds free ubiquitin non-covalently via its RING-type zinc finger. Ubiquitin-binding leads to enhance the E3 ubiquitin-protein ligase activity by stabilizing the ubiquitin-conjugating enzyme E2 (donor ubiquitin) in the 'closed' conformation and activating ubiquitin transfer. E3 ubiquitin-protein ligase required for mesoderm patterning during embryonic development. Acts as an enhancer of the transcriptional responses of the smad2/smad3 effectors, which are activated downstream of BMP. Acts by mediating ubiquitination and degradation of SMAD inhibitors such as smad7, inducing their proteasomal degradation and thereby enhancing the transcriptional activity of TGF-beta and BMP. Specifically binds polysumoylated chains via SUMO interaction motifs (SIMs) and mediates ubiquitination of sumoylated substrates. The regulation of the BMP-SMAD signaling is however independent of sumoylation and is not dependent of SUMO interaction motifs (SIMs). The chain is E3 ubiquitin-protein ligase arkadia (rnf111) from Xenopus tropicalis (Western clawed frog).